The primary structure comprises 431 residues: 3-phosphoshikimate 1-carboxyvinyltransferase (431 aa).

Positions 22, 23, and 27 each coordinate 3-phosphoshikimate. Lysine 22 lines the phosphoenolpyruvate pocket. 2 residues coordinate phosphoenolpyruvate: glycine 94 and arginine 122. 3-phosphoshikimate contacts are provided by serine 167, glutamine 169, aspartate 315, and lysine 342. Glutamine 169 lines the phosphoenolpyruvate pocket. Residue aspartate 315 is the Proton acceptor of the active site. Phosphoenolpyruvate is bound by residues arginine 346 and arginine 388.

The protein belongs to the EPSP synthase family. Monomer.

Its subcellular location is the cytoplasm. The enzyme catalyses 3-phosphoshikimate + phosphoenolpyruvate = 5-O-(1-carboxyvinyl)-3-phosphoshikimate + phosphate. Its pathway is metabolic intermediate biosynthesis; chorismate biosynthesis; chorismate from D-erythrose 4-phosphate and phosphoenolpyruvate: step 6/7. Catalyzes the transfer of the enolpyruvyl moiety of phosphoenolpyruvate (PEP) to the 5-hydroxyl of shikimate-3-phosphate (S3P) to produce enolpyruvyl shikimate-3-phosphate and inorganic phosphate. The sequence is that of 3-phosphoshikimate 1-carboxyvinyltransferase from Pelobacter propionicus (strain DSM 2379 / NBRC 103807 / OttBd1).